A 74-amino-acid polypeptide reads, in one-letter code: Lambda-hexatoxin-Hv1e (74 aa).

Positions 1-22 (MNTATCFIVLLVVATVIGGIEA) are cleaved as a signal peptide. Residues 23 to 35 (GEFDMRKDVMGLF) constitute a propeptide that is removed on maturation. 4 cysteine pairs are disulfide-bonded: Cys-40/Cys-54, Cys-47/Cys-59, Cys-50/Cys-51, and Cys-53/Cys-69.

The protein belongs to the neurotoxin 11 (kappa toxin) family. Expressed by the venom gland.

It localises to the secreted. This excitatory toxin inhibits insect calcium-activated potassium (KCa) channels (Slo-type). The chain is Lambda-hexatoxin-Hv1e from Hadronyche versuta (Blue mountains funnel-web spider).